A 237-amino-acid polypeptide reads, in one-letter code: MGRAYQNKKDSMAKTAGAKTKVYSKYGKEIYICAKNGGTDPDGNLSLRRLIERAKKDQVPAHVIDRAIDKAKGGGGEDYVATRYEGYGPGNCMIIVDCLTDNNKRTFADVRVCFTKANAKIGAQNSVSHLFDHLAIFVFDGDDDETVLEALMMADVDVTDVEVENGKVTVFAPHTEYNNTRTALEEMGVTEFDEDLISFVPQIAAPIEGEDVEVMERFLAMLEDCDDVQNVYHNAEF.

The protein belongs to the TACO1 family.

The protein localises to the cytoplasm. The protein is Probable transcriptional regulatory protein PSHAa1370 of Pseudoalteromonas translucida (strain TAC 125).